Here is a 181-residue protein sequence, read N- to C-terminus: 6,7-dimethyl-8-ribityllumazine synthase 2 (181 aa).

The segment at M1 to S23 is disordered. Residues W40, S74–E76, L98–V100, and S129 contribute to the 5-amino-6-(D-ribitylamino)uracil site.

It belongs to the DMRL synthase family.

It catalyses the reaction (2S)-2-hydroxy-3-oxobutyl phosphate + 5-amino-6-(D-ribitylamino)uracil = 6,7-dimethyl-8-(1-D-ribityl)lumazine + phosphate + 2 H2O + H(+). Its pathway is cofactor biosynthesis; riboflavin biosynthesis; riboflavin from 2-hydroxy-3-oxobutyl phosphate and 5-amino-6-(D-ribitylamino)uracil: step 1/2. In terms of biological role, catalyzes the formation of 6,7-dimethyl-8-ribityllumazine by condensation of 5-amino-6-(D-ribitylamino)uracil with 3,4-dihydroxy-2-butanone 4-phosphate. This is the penultimate step in the biosynthesis of riboflavin. In Rhodopseudomonas palustris (strain ATCC BAA-98 / CGA009), this protein is 6,7-dimethyl-8-ribityllumazine synthase 2.